Reading from the N-terminus, the 217-residue chain is Putative peroxiredoxin Q, chloroplastic (217 aa).

The N-terminal 66 residues, Met-1–Val-66, are a transit peptide targeting the chloroplast. One can recognise a Thioredoxin domain in the interval Val-70–Leu-217. The active-site Cysteine sulfenic acid (-SOH) intermediate is the Cys-112. Cys-112 and Cys-117 are oxidised to a cystine.

The protein belongs to the peroxiredoxin family. BCP/PrxQ subfamily. Monomer.

It localises to the plastid. The protein localises to the chloroplast thylakoid lumen. The enzyme catalyses a hydroperoxide + [thioredoxin]-dithiol = an alcohol + [thioredoxin]-disulfide + H2O. Functionally, thiol-specific peroxidase that catalyzes the reduction of hydrogen peroxide and organic hydroperoxides to water and alcohols, respectively. Plays a role in cell protection against oxidative stress by detoxifying peroxides. In Oryza sativa subsp. indica (Rice), this protein is Putative peroxiredoxin Q, chloroplastic.